Reading from the N-terminus, the 375-residue chain is Succinyl-diaminopimelate desuccinylase (375 aa).

H66 contributes to the Zn(2+) binding site. The active site involves D68. D99 serves as a coordination point for Zn(2+). E133 acts as the Proton acceptor in catalysis. Positions 134, 162, and 348 each coordinate Zn(2+).

Belongs to the peptidase M20A family. DapE subfamily. As to quaternary structure, homodimer. It depends on Zn(2+) as a cofactor. The cofactor is Co(2+).

The catalysed reaction is N-succinyl-(2S,6S)-2,6-diaminopimelate + H2O = (2S,6S)-2,6-diaminopimelate + succinate. Its pathway is amino-acid biosynthesis; L-lysine biosynthesis via DAP pathway; LL-2,6-diaminopimelate from (S)-tetrahydrodipicolinate (succinylase route): step 3/3. Catalyzes the hydrolysis of N-succinyl-L,L-diaminopimelic acid (SDAP), forming succinate and LL-2,6-diaminopimelate (DAP), an intermediate involved in the bacterial biosynthesis of lysine and meso-diaminopimelic acid, an essential component of bacterial cell walls. This Alkalilimnicola ehrlichii (strain ATCC BAA-1101 / DSM 17681 / MLHE-1) protein is Succinyl-diaminopimelate desuccinylase.